Here is a 245-residue protein sequence, read N- to C-terminus: MSFTSMPSLREQQHPLIRQLADCIEAAWHQHLDLSPYHLPDELGYVEGRLEGEKLTIENRCYQTPQFRKMHLELANIGNMLDILHCVMFPRPQYNLPMFGCDLVGGRGQISAAIADLSPIQLERTLPESYTTALAQLPVLNFSQPRELPEWGNIFSDFCIFVRPGSPEEEAMFLSRVREFLDIHCMQAIASHPVSVEQVTQNLAGQHNYCTKQQQNDKTRRVLEKAFGPVWAENYMTTVLFDLPT.

This sequence belongs to the HY2 family.

It catalyses the reaction (2R,3Z)-phycocyanobilin + 4 oxidized [2Fe-2S]-[ferredoxin] = biliverdin IXalpha + 4 reduced [2Fe-2S]-[ferredoxin] + 4 H(+). Catalyzes the four-electron reduction of biliverdin IX-alpha (2-electron reduction at both the A and D rings); the reaction proceeds via an isolatable 2-electron intermediate, 181,182-dihydrobiliverdin. This is Phycocyanobilin:ferredoxin oxidoreductase (pcyA) from Nostoc punctiforme (strain ATCC 29133 / PCC 73102).